Reading from the N-terminus, the 420-residue chain is Tyrosine--tRNA ligase (420 aa).

Position 36 (tyrosine 36) interacts with L-tyrosine. The 'HIGH' region motif lies at proline 41–histidine 50. Positions 170 and 174 each coordinate L-tyrosine. The 'KMSKS' region signature appears at lysine 231 to serine 235. Lysine 234 provides a ligand contact to ATP. In terms of domain architecture, S4 RNA-binding spans threonine 353 to glutamine 420.

It belongs to the class-I aminoacyl-tRNA synthetase family. TyrS type 1 subfamily. Homodimer.

It localises to the cytoplasm. It carries out the reaction tRNA(Tyr) + L-tyrosine + ATP = L-tyrosyl-tRNA(Tyr) + AMP + diphosphate + H(+). Functionally, catalyzes the attachment of tyrosine to tRNA(Tyr) in a two-step reaction: tyrosine is first activated by ATP to form Tyr-AMP and then transferred to the acceptor end of tRNA(Tyr). This is Tyrosine--tRNA ligase from Staphylococcus aureus (strain COL).